Reading from the N-terminus, the 477-residue chain is Glycogen synthase (477 aa).

Residue lysine 15 coordinates ADP-alpha-D-glucose.

It belongs to the glycosyltransferase 1 family. Bacterial/plant glycogen synthase subfamily.

It catalyses the reaction [(1-&gt;4)-alpha-D-glucosyl](n) + ADP-alpha-D-glucose = [(1-&gt;4)-alpha-D-glucosyl](n+1) + ADP + H(+). It functions in the pathway glycan biosynthesis; glycogen biosynthesis. Functionally, synthesizes alpha-1,4-glucan chains using ADP-glucose. This is Glycogen synthase from Erwinia tasmaniensis (strain DSM 17950 / CFBP 7177 / CIP 109463 / NCPPB 4357 / Et1/99).